The sequence spans 72 residues: Sperm protein associated with the nucleus on the X chromosome N1 (72 aa).

Residues 1-40 are disordered; sequence MEKPTSSTNGEKRKSPCDSNSKNDEMQETPNRDLVLEPSL. The segment covering 10–35 has biased composition (basic and acidic residues); it reads GEKRKSPCDSNSKNDEMQETPNRDLV.

It belongs to the SPAN-X family.

The chain is Sperm protein associated with the nucleus on the X chromosome N1 (SPANXN1) from Pan troglodytes (Chimpanzee).